The chain runs to 350 residues: Transmembrane protein 185A (350 aa).

The next 7 helical transmembrane spans lie at 16-36 (LIYA…DGII), 41-61 (WAVF…ASVG), 81-101 (FKAM…EVLV), 111-131 (FWLL…AACV), 177-197 (ILMS…VLFL), 211-231 (ITMA…EILL), and 240-260 (AFSC…LMAT). A mediates interaction with MAP1B region spans residues 298–350 (DLHHEDSEETEETPVPEPPKIAPMFRKKARVVITQSPGKYVLPPPKLNIEMPD).

It belongs to the TMEM185 family. Interacts with MAP1B. As to expression, broadly expressed in brain where it is specifically expressed by neurons (at protein level). Also detected in some cells of arterioles, intestine, lung and testis (at protein level).

The protein localises to the cell projection. It is found in the dendrite. Its subcellular location is the membrane. The polypeptide is Transmembrane protein 185A (Tmem185a) (Mus musculus (Mouse)).